We begin with the raw amino-acid sequence, 282 residues long: 4-diphosphocytidyl-2-C-methyl-D-erythritol kinase (282 aa).

Residue lysine 9 is part of the active site. Proline 98 to serine 108 contributes to the ATP binding site. The active site involves aspartate 140.

This sequence belongs to the GHMP kinase family. IspE subfamily. As to quaternary structure, homodimer.

It catalyses the reaction 4-CDP-2-C-methyl-D-erythritol + ATP = 4-CDP-2-C-methyl-D-erythritol 2-phosphate + ADP + H(+). The protein operates within isoprenoid biosynthesis; isopentenyl diphosphate biosynthesis via DXP pathway; isopentenyl diphosphate from 1-deoxy-D-xylulose 5-phosphate: step 3/6. Catalyzes the phosphorylation of the position 2 hydroxy group of 4-diphosphocytidyl-2C-methyl-D-erythritol. This chain is 4-diphosphocytidyl-2-C-methyl-D-erythritol kinase, found in Klebsiella pneumoniae (strain 342).